Consider the following 416-residue polypeptide: Glutamyl-tRNA reductase 1 (416 aa).

Residues 57 to 60, Ser-113, 118 to 120, and Gln-124 contribute to the substrate site; these read TCNR and DFE. Cys-58 (nucleophile) is an active-site residue. 193-198 lines the NADP(+) pocket; the sequence is GTGKIG.

The protein belongs to the glutamyl-tRNA reductase family. In terms of assembly, homodimer.

The catalysed reaction is (S)-4-amino-5-oxopentanoate + tRNA(Glu) + NADP(+) = L-glutamyl-tRNA(Glu) + NADPH + H(+). Its pathway is porphyrin-containing compound metabolism; protoporphyrin-IX biosynthesis; 5-aminolevulinate from L-glutamyl-tRNA(Glu): step 1/2. Its function is as follows. Catalyzes the NADPH-dependent reduction of glutamyl-tRNA(Glu) to glutamate 1-semialdehyde (GSA). This is Glutamyl-tRNA reductase 1 from Flavobacterium johnsoniae (strain ATCC 17061 / DSM 2064 / JCM 8514 / BCRC 14874 / CCUG 350202 / NBRC 14942 / NCIMB 11054 / UW101) (Cytophaga johnsonae).